A 90-amino-acid chain; its full sequence is Conotoxin ba9a (90 aa).

A signal peptide spans 1–27 (MHLSLARSAGLMWLLLFAVGNFVGVQP). Residues 28-62 (GQITRDVDNGQLADNRRNLQSLRKPMTLFKSLNKR) constitute a propeptide that is removed on maturation. E67 is modified (4-carboxyglutamate). P76 and P80 each carry 4-hydroxyproline.

In terms of tissue distribution, expressed by the venom duct.

It localises to the secreted. The sequence is that of Conotoxin ba9a from Conus bayani (Bayan's cone).